Reading from the N-terminus, the 277-residue chain is Large ribosomal subunit protein uL2 (277 aa).

The segment at 222-277 is disordered; sequence GSVMNPNDHPHGGGEGKAPVGRKAPSTPWGKPALGLKTRNKKAKSDKLIVRRRNEK. A compositionally biased stretch (basic and acidic residues) spans 264-277; that stretch reads AKSDKLIVRRRNEK.

Belongs to the universal ribosomal protein uL2 family. In terms of assembly, part of the 50S ribosomal subunit. Forms a bridge to the 30S subunit in the 70S ribosome.

Functionally, one of the primary rRNA binding proteins. Required for association of the 30S and 50S subunits to form the 70S ribosome, for tRNA binding and peptide bond formation. It has been suggested to have peptidyltransferase activity; this is somewhat controversial. Makes several contacts with the 16S rRNA in the 70S ribosome. This chain is Large ribosomal subunit protein uL2, found in Streptococcus thermophilus (strain CNRZ 1066).